Here is a 976-residue protein sequence, read N- to C-terminus: LRR receptor-like serine/threonine-protein kinase ERECTA (976 aa).

Residues 1–24 (MALFRDIVLLGFLFCLSLVATVTS) form the signal peptide. Residues 25-580 (EEGATLLEIK…RRTVRVSISR (556 aa)) lie on the Extracellular side of the membrane. N-linked (GlcNAc...) asparagine glycosylation is found at asparagine 65 and asparagine 74. LRR repeat units lie at residues 69-92 (NVVALNLSDLNLDGEISPAIGDLK), 93-115 (SLLSIDLRGNRLSGQIPDEIGDC), 117-140 (SLQNLDLSFNELSGDIPFSISKLK), 141-163 (QLEQLILKNNQLIGPIPSTLSQI), 165-187 (NLKILDLAQNKLSGEIPRLIYWN), 189-212 (VLQYLGLRGNNLVGNISPDLCQLT), 213-235 (GLWYFDVRNNSLTGSIPETIGNC), 237-259 (AFQVLDLSYNQLTGEIPFDIGFL), 260-282 (QVATLSLQGNQLSGKIPSVIGLM), 284-306 (ALAVLDLSGNLLSGSIPPILGNL), 308-330 (FTEKLYLHSNKLTGSIPPELGNM), 332-355 (KLHYLELNDNHLTGHIPPELGKLT), 356-379 (DLFDLNVANNDLEGPIPDHLSSCT), 380-401 (NLNSLNVHGNKFSGTIPRAFQK), 404-425 (SMTYLNLSSNNIKGPIPVELSR), 428-449 (NLDTLDLSNNKINGIIPSSLGD), 452-473 (HLLKMNLSRNHITGVVPGDFGN), 476-498 (SIMEIDLSNNDISGPIPEELNQL), 500-522 (NIILLRLENNNLTGNVGSLANCL), and 523-545 (SLTVLNVSHNNLVGDIPKNNNFS). Residues asparagine 221 and asparagine 234 are each glycosylated (N-linked (GlcNAc...) asparagine). N-linked (GlcNAc...) asparagine glycosylation is found at asparagine 305 and asparagine 329. The N-linked (GlcNAc...) asparagine glycan is linked to asparagine 409. An N-linked (GlcNAc...) asparagine glycan is attached at asparagine 457. N-linked (GlcNAc...) asparagine glycans are attached at residues asparagine 510, asparagine 528, and asparagine 543. Residues 581-601 (AAILGIAIGGLVILLMVLIAA) traverse the membrane as a helical segment. Topologically, residues 602–976 (CRPHNPPPFL…FGQVISQNSE (375 aa)) are cytoplasmic. Threonine 645 bears the Phosphothreonine mark. Residues 648–918 (LSEKYIIGHG…QVTRVLGSFM (271 aa)) form the Protein kinase domain. ATP contacts are provided by residues 654-662 (IGHGASSTV) and lysine 676. Phosphotyrosine is present on residues tyrosine 721 and tyrosine 760. Aspartate 773 acts as the Proton acceptor in catalysis. Position 815 is a phosphotyrosine (tyrosine 815). Threonine 823 carries the post-translational modification Phosphothreonine.

Belongs to the protein kinase superfamily. Ser/Thr protein kinase family. Homodimer and heterodimer with ERL1 and TMM. Interacts with EPF1, EPF2, EPFL4, EPFL5 and EPFL6. Interacts with SERK1, SERK2, SERK3/BAK1 and SERK4 in a EPF2-induced manner. Interacts with EPFL9/STOMAGEN. Mostly expressed in shoot apical meristems (SAM), organ primordia, flowers, siliques and young rosette leaves, and, to a lower extent, in stems and cauline leaves. Expressed in growing inflorescence stems and pedicels. Detected in epidermis, phloem and xylem.

The protein localises to the cell membrane. It carries out the reaction L-seryl-[protein] + ATP = O-phospho-L-seryl-[protein] + ADP + H(+). It catalyses the reaction L-threonyl-[protein] + ATP = O-phospho-L-threonyl-[protein] + ADP + H(+). Receptor kinase that, together with ERL1 and ERL2, regulates aerial architecture, including inflorescence (e.g. shoot apical meristem-originating organ shape, elongation of the internode and pedicels, and adaxial-abaxial polarity), and stomatal patterning (e.g. density and clustering), probably by tuning cell division and expansion. Redundantly involved with ERL1 in procambial development regulation. Forms a functional ligand-receptor pair with EPF2 (AC Q8LC53). Modulates plant transpiration efficiency by controlling stomatal density, leaf photosynthetic capacity, epidermal cell expansion, mesophyll cell proliferation and cell-cell contact. A phloem-specific expression of ER is sufficient for proper inflorescence architecture. Probable major trait regulating canalization (maintenance of phenotype despite varying environment) in many aspect of the plant physiology (e.g. plant morphology, light-dependent leaves number, branch number, flowering time, phytate and mineral concentrations) by transducing microenvironmental variation into phenotypic differentiation (ecological amplifier). May maintain development integrity in heat stress conditions. Regulates cell wall composition and structure. Confers resistance to the pathogenic bacteria Ralstonia solanacearum and to the necrotrophic fungi Plectosphaerella cucumerina and Pythium irregulare, and required for callose deposition upon infection. Resistance to P.cucumerina seems cell wall-mediated. Forms a constitutive complex with TMM involved in the recognition of the stomatal regulatory peptides EPF1, EPF2 and EPFL9/STOMAGEN. The polypeptide is LRR receptor-like serine/threonine-protein kinase ERECTA (Arabidopsis thaliana (Mouse-ear cress)).